The chain runs to 434 residues: MKRVTVIGAGLAGSEAAWQLAKRGVQVDLYEMRPVKQTPAHHTDQFAELVCSNSLRANQLTNAVGVLKEEMRQLDSLIMKAADLASVPAGGALAVDRHDFAGYVTETLKNHPNVTVHHEELEAIPEGPTIVATGPLTSAALSESLKQFTGEDYLYFFDAAAPILDGDTIDRDKVYLKSRYDKGEAAYLNCPMTEEEFTHFHNELIKAEVVPLKEFEKEIYFEGCMPFEVLASRGPKTLLFGPMKPVGLEDPKTGKRPYAVVQLRQDNSAGTLFNLVGFQTHLKWGEQKRIIRLIPGLENAEIVRYGVMHRNTFVNSPNLLQPTYQTRTRHDLFFAGQMTGVEGYVESAASGLTAGINAARLVNEAEPVAFPKETMMGAMAHYITTTEGKNFQPMNANFGLVPGLVGQTGRMKKPEKYALLAERALEAIKDFTDM.

8–13 (GAGLAG) is an FAD binding site.

It belongs to the MnmG family. TrmFO subfamily. FAD is required as a cofactor.

Its subcellular location is the cytoplasm. The enzyme catalyses uridine(54) in tRNA + (6R)-5,10-methylene-5,6,7,8-tetrahydrofolate + NADH + H(+) = 5-methyluridine(54) in tRNA + (6S)-5,6,7,8-tetrahydrofolate + NAD(+). The catalysed reaction is uridine(54) in tRNA + (6R)-5,10-methylene-5,6,7,8-tetrahydrofolate + NADPH + H(+) = 5-methyluridine(54) in tRNA + (6S)-5,6,7,8-tetrahydrofolate + NADP(+). Functionally, catalyzes the folate-dependent formation of 5-methyl-uridine at position 54 (M-5-U54) in all tRNAs. This chain is Methylenetetrahydrofolate--tRNA-(uracil-5-)-methyltransferase TrmFO, found in Exiguobacterium sibiricum (strain DSM 17290 / CCUG 55495 / CIP 109462 / JCM 13490 / 255-15).